The following is a 206-amino-acid chain: Macrophage immunometabolism regulator (206 aa).

Position 1 is an N-acetylmethionine (Met1). A disordered region spans residues 1-41; the sequence is MEVDINGESRSTLTTLPFPGAEANSPGKAEAEKPRCSSTPC. 3 positions are modified to phosphoserine: Ser25, Ser140, and Ser167.

Belongs to the UNC119-binding protein family. As to quaternary structure, interacts with UNC119 and UNC119B; interaction preferentially takes place when UNC119 and UNC119B are unliganded with myristoylated proteins. Phosphorylated. As to expression, high expression in normal macrophages, monocytes, and cultured rheumatoid arthritis synovial fibroblasts (RASFs), with lower expression in B- and T-cells, and little to no expression in other tissues and cell lines.

Its subcellular location is the cytoplasm. The protein localises to the cell projection. It localises to the cilium. Functionally, regulates the macrophage function, by enhancing the resolution of inflammation and wound repair functions mediated by M2 macrophages. The regulation of macrophage function is, due at least in part, to its ability to inhibit glycolysis. May also play a role in trafficking of proteins via its interaction with UNC119 and UNC119B cargo adapters: may help the release of UNC119 and UNC119B cargo or the recycling of UNC119 and UNC119B. May play a role in ciliary membrane localization via its interaction with UNC119B and protein transport into photoreceptor cells. The chain is Macrophage immunometabolism regulator from Homo sapiens (Human).